The following is a 493-amino-acid chain: Alpha-amylase-related protein (493 aa).

Positions 1 to 19 (MFKFALTLTLCLAGSLSLA) are cleaved as a signal peptide. Glutamine 20 is modified (pyrrolidone carboxylic acid). Cysteines 47 and 103 form a disulfide. Ca(2+) is bound by residues asparagine 117, glutamine 168, and aspartate 177. Cysteine 156 and cysteine 170 are joined by a disulfide. Chloride is bound at residue arginine 205. Aspartate 207 acts as the Nucleophile in catalysis. A Ca(2+)-binding site is contributed by histidine 211. The active-site Proton donor is the glutamate 244. Asparagine 307 and arginine 342 together coordinate chloride. Intrachain disulfides connect cysteine 375–cysteine 381, cysteine 417–cysteine 440, and cysteine 447–cysteine 459.

The protein belongs to the glycosyl hydrolase 13 family. As to quaternary structure, monomer. Ca(2+) serves as cofactor. Chloride is required as a cofactor.

The protein localises to the secreted. The enzyme catalyses Endohydrolysis of (1-&gt;4)-alpha-D-glucosidic linkages in polysaccharides containing three or more (1-&gt;4)-alpha-linked D-glucose units.. This chain is Alpha-amylase-related protein (Amyrel), found in Drosophila sechellia (Fruit fly).